A 79-amino-acid chain; its full sequence is MSEVAEKVKKIVVEHLGVDEAKVTPEASFIDDLGADSLDTVELVMAFEEAFGVEIPEDAAEKIGTVKDAIDYIEKKKAE.

The region spanning S2 to K77 is the Carrier domain. An O-(pantetheine 4'-phosphoryl)serine modification is found at S37.

The protein belongs to the acyl carrier protein (ACP) family. In terms of processing, 4'-phosphopantetheine is transferred from CoA to a specific serine of apo-ACP by AcpS. This modification is essential for activity because fatty acids are bound in thioester linkage to the sulfhydryl of the prosthetic group.

The protein resides in the cytoplasm. It participates in lipid metabolism; fatty acid biosynthesis. Functionally, carrier of the growing fatty acid chain in fatty acid biosynthesis. The sequence is that of Acyl carrier protein from Acidiphilium cryptum (strain JF-5).